An 882-amino-acid polypeptide reads, in one-letter code: DNA replication helicase (882 aa).

The tract at residues 1-29 (MAAAGGERQLDGQKPGPPHLQQPGDRPAV) is disordered. Residue 97 to 104 (GNAGSGKS) coordinates ATP.

It belongs to the herpesviridae helicase family. Associates with the primase and the primase-associated factor to form the helicase-primase complex.

Its subcellular location is the host nucleus. Its function is as follows. Component of the helicase/primase complex. Unwinds the DNA at the replication forks and generates single-stranded DNA for both leading and lagging strand synthesis. The primase synthesizes short RNA primers on the lagging strand that the polymerase elongates using dNTPs. Possesses helicase-like motifs and therefore may act as the helicase subunit of the complex. The chain is DNA replication helicase from Homo sapiens (Human).